A 181-amino-acid chain; its full sequence is Inner membrane-spanning protein YciB (181 aa).

5 consecutive transmembrane segments (helical) span residues 22-42 (IYTATGALIIATAIQLVVTYA), 50-70 (MQLITFIMVTVFGGMTIFLHD), 80-100 (IVYCVFAAGLIIAHILGKPVI), 122-142 (WVLFFTVCAIANLYVAFEMPL), and 148-168 (FKVFGLLGLTFLYTLFTGMYV).

The protein belongs to the YciB family.

The protein resides in the cell inner membrane. Plays a role in cell envelope biogenesis, maintenance of cell envelope integrity and membrane homeostasis. The polypeptide is Inner membrane-spanning protein YciB (Aliivibrio fischeri (strain ATCC 700601 / ES114) (Vibrio fischeri)).